A 478-amino-acid polypeptide reads, in one-letter code: Probable cytosolic Fe-S cluster assembly factor AGAP009023 (478 aa).

Cys23, Cys69, Cys72, Cys75, Cys189, Cys245, Cys396, and Cys400 together coordinate [4Fe-4S] cluster.

Belongs to the NARF family.

Component of the cytosolic iron-sulfur (Fe/S) protein assembly machinery. Required for maturation of extramitochondrial Fe/S proteins. The polypeptide is Probable cytosolic Fe-S cluster assembly factor AGAP009023 (Anopheles gambiae (African malaria mosquito)).